Reading from the N-terminus, the 486-residue chain is Transcription enhancer factor-like protein egl-44 (486 aa).

The segment covering 47–57 (GTTTPTTTSGG) has biased composition (low complexity). The disordered stretch occupies residues 47–87 (GTTTPTTTSGGQMMTLSPPAGDGPGSAGSMAPESTSSLSDL). Residues 88–164 (SGDAEGVWSI…QVLARKKLRD (77 aa)) constitute a DNA-binding region (TEA). Positions 165-188 (EQAKKKGDIPSLLQQASPPGGVKS) are disordered.

In terms of assembly, interacts (via N-terminus) with egl-46 (via C-terminus); the interaction is direct; the interaction may regulate transcription. Interacts with yap-1 (via WW domain); the interaction may regulate transcription. As to expression, expressed in HSN neurons in embryos and in the FLP neurons from the L1 stage through to adults. Not expressed in touch cells. Also expressed in larval hypodermis, intestine, pharyngeal muscle and other neurons. In adults expression is lost from some neurons, is weaker in the hypodermis but remains in the intestine. Expressed in HOB neuron, ray neurons RnA and RnB, and the ray structural cell, Rnst; rays are male-specific genital sensilla (simple sense organs).

The protein localises to the nucleus. Its function is as follows. Transcription factor. Binds to DNA sequence motif 5'-CATNNNNAAATGCAT-3' as a heterodimer with egl-46. Represses expression of genes involved in differentiation of touch receptor neurons (TRN), probably acting as a heterodimer with egl-46, perhaps by occupying similar cis-regulatory elements as an unc-86/mec-3 heterodimer. Plays a role in cell fate specification of neurons, including the hook neuron HOB, and touch receptor neurons. Involved in male mating behavior, acting in concert with egl-46, via modulation of expression of polycystins lov-1 and pkd-2, homeodomain protein ceh-26, and neuropeptide-like protein nlp-8. Acts upstream of egl-46 to prevent touch cell differentiation in FLP neurons. Plays a role in neuron differentiation by repressing the expression of zag-1 in FLP neurons, probably acting as a heterodimer with egl-46; because zag-1 represses expression of egl-46 and egl-44, together these proteins form a bistable, negative-feedback loop that regulates the choice between neuronal fates. Also promotes HSN neuron development. In association with egl-46, regulates cell cycle exit in the neuronal Q cell lineage. Plays a role in specifying commissural dendrites of the PVD nociceptive neurons, acting in concert with egl-46. May be involved in thermal stress response downstream of yap-1. This is Transcription enhancer factor-like protein egl-44 (egl-44) from Caenorhabditis elegans.